A 1109-amino-acid chain; its full sequence is ABC transporter G family member 28 (1109 aa).

A run of 2 helical transmembrane segments spans residues 5–25 (NSYF…LILQ) and 291–311 (NITA…IILY). The interval 325–411 (QAKSREKAVQ…DTKKGKKKEK (87 aa)) is disordered. Over residues 339 to 357 (SQSREKWKSAKDIAKKHAT) the composition is skewed to basic and acidic residues. In terms of domain architecture, ABC transporter spans 499-741 (VAFKDLSITL…FSSLGIVVPE (243 aa)). 533 to 540 (GPSGAGKT) serves as a coordination point for ATP. Residues 859-1056 (QQYRYFLGRL…ALEAFVVSNA (198 aa)) enclose the ABC transmembrane type-2 domain. Helical transmembrane passes span 879-899 (LAVD…LAKV), 904-924 (FGAM…KITA), 954-974 (TVDH…FYFF), 986-1006 (VVLI…AILF), 1008-1028 (PGPA…IATS), and 1084-1104 (CLVF…FCMV).

Belongs to the ABC transporter superfamily. ABCG family. Eye pigment precursor importer (TC 3.A.1.204) subfamily.

The protein resides in the membrane. This is ABC transporter G family member 28 (ABCG28) from Arabidopsis thaliana (Mouse-ear cress).